A 118-amino-acid polypeptide reads, in one-letter code: Na(+)/H(+) antiporter subunit G1 (118 aa).

Transmembrane regions (helical) follow at residues 4–24 (IILISLALIFVIIGALISALA), 38–58 (AHAAGKASTLGAMSLLFGTFL), and 60–80 (FIATQGFVNMQLIVAIIFVLI).

Belongs to the CPA3 antiporters (TC 2.A.63) subunit G family. May form a heterooligomeric complex that consists of seven subunits: mnhA1, mnhB1, mnhC1, mnhD1, mnhE1, mnhF1 and mnhG1.

The protein resides in the cell membrane. Mnh complex is a Na(+)/H(+) antiporter involved in Na(+) excretion. This chain is Na(+)/H(+) antiporter subunit G1 (mnhG1), found in Staphylococcus aureus (strain Mu3 / ATCC 700698).